Consider the following 201-residue polypeptide: FMN-dependent NADH:quinone oxidoreductase (201 aa).

Residues Ser10, 16-18 (SQS), 96-99 (MYNF), and 140-143 (SRGG) each bind FMN.

Belongs to the azoreductase type 1 family. Homodimer. FMN is required as a cofactor.

It carries out the reaction 2 a quinone + NADH + H(+) = 2 a 1,4-benzosemiquinone + NAD(+). The enzyme catalyses N,N-dimethyl-1,4-phenylenediamine + anthranilate + 2 NAD(+) = 2-(4-dimethylaminophenyl)diazenylbenzoate + 2 NADH + 2 H(+). Functionally, quinone reductase that provides resistance to thiol-specific stress caused by electrophilic quinones. In terms of biological role, also exhibits azoreductase activity. Catalyzes the reductive cleavage of the azo bond in aromatic azo compounds to the corresponding amines. The polypeptide is FMN-dependent NADH:quinone oxidoreductase (Cronobacter sakazakii (strain ATCC BAA-894) (Enterobacter sakazakii)).